The sequence spans 361 residues: Phosphoserine aminotransferase (361 aa).

An L-glutamate-binding site is contributed by arginine 43. Residues alanine 77 to serine 78, tryptophan 103, threonine 153, aspartate 173, and glutamine 196 contribute to the pyridoxal 5'-phosphate site. Lysine 197 bears the N6-(pyridoxal phosphate)lysine mark. Asparagine 238–threonine 239 contributes to the pyridoxal 5'-phosphate binding site.

Belongs to the class-V pyridoxal-phosphate-dependent aminotransferase family. SerC subfamily. As to quaternary structure, homodimer. It depends on pyridoxal 5'-phosphate as a cofactor.

The protein resides in the cytoplasm. It carries out the reaction O-phospho-L-serine + 2-oxoglutarate = 3-phosphooxypyruvate + L-glutamate. It catalyses the reaction 4-(phosphooxy)-L-threonine + 2-oxoglutarate = (R)-3-hydroxy-2-oxo-4-phosphooxybutanoate + L-glutamate. Its pathway is amino-acid biosynthesis; L-serine biosynthesis; L-serine from 3-phospho-D-glycerate: step 2/3. It functions in the pathway cofactor biosynthesis; pyridoxine 5'-phosphate biosynthesis; pyridoxine 5'-phosphate from D-erythrose 4-phosphate: step 3/5. Catalyzes the reversible conversion of 3-phosphohydroxypyruvate to phosphoserine and of 3-hydroxy-2-oxo-4-phosphonooxybutanoate to phosphohydroxythreonine. The chain is Phosphoserine aminotransferase from Pseudomonas putida (strain ATCC 47054 / DSM 6125 / CFBP 8728 / NCIMB 11950 / KT2440).